The primary structure comprises 350 residues: 2-oxoglutarate-dependent ethylene/succinate-forming enzyme (350 aa).

Positions 166–286 constitute a Fe2OG dioxygenase domain; that stretch reads GWHHMRVLRF…RFACAYFHEP (121 aa). Residues His189 and His268 each contribute to the Fe cation site.

This sequence belongs to the iron/ascorbate-dependent oxidoreductase family. As to quaternary structure, monomer. It depends on Fe(2+) as a cofactor.

The catalysed reaction is 2-oxoglutarate + O2 + 2 H(+) = ethene + 3 CO2 + H2O. It catalyses the reaction L-arginine + 2-oxoglutarate + O2 = guanidine + L-glutamate 5-semialdehyde + succinate + CO2. The protein operates within alkene biosynthesis; ethylene biosynthesis via 2-oxoglutarate. Its activity is regulated as follows. Activated by catalase. Inhibited by chelating reagents such as EDTA and Tiron (4,5-dihydroxy-1,3-benzene disulphonic acid), and by DTNB (5,5'-dithio-bis-2-nitrobenzoate) and hydrogen peroxide. Functionally, simultaneously catalyzes two reactions, namely formation of ethylene and of succinate from 2-oxoglutarate, with a molar ratio of 2:1. The polypeptide is 2-oxoglutarate-dependent ethylene/succinate-forming enzyme (efe) (Pseudomonas savastanoi pv. phaseolicola (Pseudomonas syringae pv. phaseolicola)).